A 299-amino-acid chain; its full sequence is Muscleblind-like protein (299 aa).

C3H1-type zinc fingers lie at residues 38–66 and 72–100; these read WLQVEVCREFLRGQCARSDQECKFAHPPP and QGRVTACYDSIKGRCTRENPKCKYLHPPQ.

The protein belongs to the muscleblind family.

The protein localises to the nucleus. Its function is as follows. Binds to RNA with repeat sequences CUG and CCUG. This is Muscleblind-like protein from Caenorhabditis briggsae.